Here is a 144-residue protein sequence, read N- to C-terminus: Deoxyuridine 5'-triphosphate nucleotidohydrolase (144 aa).

Substrate contacts are provided by residues 63 to 65, Asn76, and 80 to 82; these read RSG and TID.

This sequence belongs to the dUTPase family. The cofactor is Mg(2+).

It catalyses the reaction dUTP + H2O = dUMP + diphosphate + H(+). Its pathway is pyrimidine metabolism; dUMP biosynthesis; dUMP from dCTP (dUTP route): step 2/2. This enzyme is involved in nucleotide metabolism: it produces dUMP, the immediate precursor of thymidine nucleotides and it decreases the intracellular concentration of dUTP so that uracil cannot be incorporated into DNA. This chain is Deoxyuridine 5'-triphosphate nucleotidohydrolase, found in Porphyromonas gingivalis (strain ATCC 33277 / DSM 20709 / CIP 103683 / JCM 12257 / NCTC 11834 / 2561).